A 213-amino-acid polypeptide reads, in one-letter code: Cytochrome c biogenesis ATP-binding export protein CcmA (213 aa).

The region spanning 8 to 213 (LQATALTCER…RDIDLGQWAA (206 aa)) is the ABC transporter domain. 40–47 (GPNGSGKT) serves as a coordination point for ATP.

This sequence belongs to the ABC transporter superfamily. CcmA exporter (TC 3.A.1.107) family. As to quaternary structure, the complex is composed of two ATP-binding proteins (CcmA) and two transmembrane proteins (CcmB).

It is found in the cell inner membrane. The catalysed reaction is heme b(in) + ATP + H2O = heme b(out) + ADP + phosphate + H(+). Functionally, part of the ABC transporter complex CcmAB involved in the biogenesis of c-type cytochromes; once thought to export heme, this seems not to be the case, but its exact role is uncertain. Responsible for energy coupling to the transport system. The chain is Cytochrome c biogenesis ATP-binding export protein CcmA from Pseudomonas savastanoi pv. phaseolicola (strain 1448A / Race 6) (Pseudomonas syringae pv. phaseolicola (strain 1448A / Race 6)).